We begin with the raw amino-acid sequence, 75 residues long: Small ribosomal subunit protein bS18 (75 aa).

This sequence belongs to the bacterial ribosomal protein bS18 family. As to quaternary structure, part of the 30S ribosomal subunit. Forms a tight heterodimer with protein bS6.

In terms of biological role, binds as a heterodimer with protein bS6 to the central domain of the 16S rRNA, where it helps stabilize the platform of the 30S subunit. This Saccharophagus degradans (strain 2-40 / ATCC 43961 / DSM 17024) protein is Small ribosomal subunit protein bS18.